Reading from the N-terminus, the 692-residue chain is Centrosomal protein of 83 kDa (692 aa).

Coiled-coil stretches lie at residues R32–L625 and H656–S689. A Phosphoserine modification is found at S689.

The protein belongs to the CEP83 family. As to quaternary structure, interacts with CEP164 and IFT20.

It is found in the cytoplasm. Its subcellular location is the cytoskeleton. The protein resides in the microtubule organizing center. It localises to the centrosome. The protein localises to the centriole. Functionally, component of the distal appendage region of the centriole involved in the initiation of primary cilium assembly. May collaborate with IFT20 in the trafficking of ciliary membrane proteins from the Golgi complex to the cilium during the initiation of primary cilium assembly. The polypeptide is Centrosomal protein of 83 kDa (Cep83) (Mus musculus (Mouse)).